We begin with the raw amino-acid sequence, 198 residues long: CASP-like protein 1U1 (198 aa).

The Cytoplasmic portion of the chain corresponds to 1 to 30; the sequence is MSDTPVVVIPRKGYVDGHHGYHHSYHSGLN. The chain crosses the membrane as a helical span at residues 31–51; that stretch reads LLLRLLQAFATAAAVIVMLLA. The Extracellular portion of the chain corresponds to 52 to 73; that stretch reads TQTEFTRYGEVRGRWRDYPAYK. Residues 74 to 94 form a helical membrane-spanning segment; the sequence is WFIIANAVVFVYALLATLVAC. Residues 95-117 lie on the Cytoplasmic side of the membrane; that stretch reads CALIARRGPLSYSPSAWLTFLLD. The helical transmembrane segment at 118–138 threads the bilayer; sequence FVAASALMSAASAALAVALIA. Residues 139–165 lie on the Extracellular side of the membrane; it reads RNGQNLQGQHYWPTFCNYVTRFCDYAQ. The helical transmembrane segment at 166-186 threads the bilayer; it reads GAIIASFCGFGLLALSTLLAA. Over 187 to 198 the chain is Cytoplasmic; it reads SALHHLAWHRLH.

It belongs to the Casparian strip membrane proteins (CASP) family. Homodimer and heterodimers.

It localises to the cell membrane. In Physcomitrium patens (Spreading-leaved earth moss), this protein is CASP-like protein 1U1.